The sequence spans 2376 residues: Reducing polyketide synthase DEP5 (2376 aa).

Residues 47 to 477 form the Ketosynthase family 3 (KS3) domain; the sequence is LEPIAVVGMG…GTNAHTIIES (431 aa). Residues C221, H358, and H399 each act as for beta-ketoacyl synthase activity in the active site. The interval 593–906 is malonyl-CoA:ACP transacylase (MAT) domain; that stretch reads VFTGQGAQWA…QYLPTLVRGF (314 aa). Catalysis depends on S685, which acts as the For malonyltransferase activity. Residues 983–1121 form an N-terminal hotdog fold region; it reads HDVLGQLTTG…GSIAIRTSAR (139 aa). Residues 983–1158 are dehydratase (DH) domain; it reads HDVLGQLTTG…FNYGPTFQDM (176 aa). The region spanning 983 to 1286 is the PKS/mFAS DH domain; it reads HDVLGQLTTG…CIAYEAAIPQ (304 aa). H1015 (proton acceptor; for dehydratase activity) is an active-site residue. The segment at 1131-1286 is C-terminal hotdog fold; the sequence is LPQRASGRLW…CIAYEAAIPQ (156 aa). Residue D1195 is the Proton donor; for dehydratase activity of the active site. The segment at 1659–1964 is enoyl reductase (ER) domain; sequence GRIQAGKVVF…DSICDNKIVI (306 aa). The ketoreductase (KR) domain stretch occupies residues 1988-2163; the sequence is ATYLLVGCLG…KPACAVVLPM (176 aa). The Carrier domain maps to 2289–2368; it reads DLVRDHFIAK…KFSELVCGAQ (80 aa). S2327 carries the post-translational modification O-(pantetheine 4'-phosphoryl)serine.

It functions in the pathway polyketide biosynthesis. Reducing polyketide synthase; part of the gene cluster that mediates the biosynthesis of depudecin, a highly oxidized eleven-carbon linear polyketide that acts as a histone deacetylase (HDAC) inhibitor and makes a small contribution to pathogenesis. The reducing polyketide synthase DEP5 is the central enzyme in depudecin biosynthesis by yielding the backbone polyketide chain. The monooxygenases DEP2 and DEP4, as well as the uncharacterized protein DEP1, then act as tailoring enzymes to modify the intermediate polyketide chain into depudecin. This chain is Reducing polyketide synthase DEP5, found in Alternaria brassicicola (Dark leaf spot agent).